The chain runs to 313 residues: Porphobilinogen deaminase (313 aa).

An S-(dipyrrolylmethanemethyl)cysteine modification is found at cysteine 242.

This sequence belongs to the HMBS family. As to quaternary structure, monomer. It depends on dipyrromethane as a cofactor.

The enzyme catalyses 4 porphobilinogen + H2O = hydroxymethylbilane + 4 NH4(+). Its pathway is porphyrin-containing compound metabolism; protoporphyrin-IX biosynthesis; coproporphyrinogen-III from 5-aminolevulinate: step 2/4. In terms of biological role, tetrapolymerization of the monopyrrole PBG into the hydroxymethylbilane pre-uroporphyrinogen in several discrete steps. The sequence is that of Porphobilinogen deaminase from Klebsiella pneumoniae subsp. pneumoniae (strain ATCC 700721 / MGH 78578).